The chain runs to 322 residues: Glycerol-3-phosphate dehydrogenase [NAD(P)+] (322 aa).

NADPH contacts are provided by Trp11, Arg31, Arg32, and Lys101. Sn-glycerol 3-phosphate contacts are provided by Lys101 and Gly130. Residue Ala134 participates in NADPH binding. 5 residues coordinate sn-glycerol 3-phosphate: Lys184, Asp237, Ser247, Arg248, and Asn249. Lys184 functions as the Proton acceptor in the catalytic mechanism. An NADPH-binding site is contributed by Arg248. NADPH-binding residues include Val270 and Glu272.

The protein belongs to the NAD-dependent glycerol-3-phosphate dehydrogenase family.

Its subcellular location is the cytoplasm. The catalysed reaction is sn-glycerol 3-phosphate + NAD(+) = dihydroxyacetone phosphate + NADH + H(+). It carries out the reaction sn-glycerol 3-phosphate + NADP(+) = dihydroxyacetone phosphate + NADPH + H(+). The protein operates within membrane lipid metabolism; glycerophospholipid metabolism. In terms of biological role, catalyzes the reduction of the glycolytic intermediate dihydroxyacetone phosphate (DHAP) to sn-glycerol 3-phosphate (G3P), the key precursor for phospholipid synthesis. This chain is Glycerol-3-phosphate dehydrogenase [NAD(P)+], found in Thermus thermophilus (strain ATCC BAA-163 / DSM 7039 / HB27).